We begin with the raw amino-acid sequence, 425 residues long: UPF0761 membrane protein XC_3370 (425 aa).

6 helical membrane passes run 48-68, 105-125, 154-174, 182-202, 216-236, and 250-270; these read VFALVPLAIVVFGVLSAFPAF, FTVAGMVALVASLLITLHSIE, GTMLAAASMAMAAYVFALPLF, LAEFAWRLAPMAVEFVCIVLI, ALPGALLAVILMEIVKWGFGF, and ALSALPILLLWIYLSWVSVLL.

It belongs to the UPF0761 family.

Its subcellular location is the cell inner membrane. The chain is UPF0761 membrane protein XC_3370 from Xanthomonas campestris pv. campestris (strain 8004).